A 937-amino-acid chain; its full sequence is AP-2 complex subunit beta (937 aa).

Thr-2 carries the N-acetylthreonine modification. At Ser-4 the chain carries Phosphoserine. At Lys-265 the chain carries N6-acetyllysine. The interval 593-617 (LPIHHGSTDAGDSPVGTTTTTNLEQ) is disordered. Polar residues predominate over residues 607–617 (VGTTTTTNLEQ). Phosphotyrosine occurs at positions 737 and 928.

This sequence belongs to the adaptor complexes large subunit family. Adaptor protein complex 2 (AP-2) is a heterotetramer composed of two large adaptins (alpha-type subunit AP2A1 or AP2A2 and beta-type subunit AP2B1), a medium adaptin (mu-type subunit AP2M1) and a small adaptin (sigma-type subunit AP2S1). Interacts with EPN1. Interacts with EPS15; clathrin competes with EPS15. Interacts with SNAP91; clathrin competes with SNAP91. Interacts with CLTC; clathrin competes with EPS15, SNAP91 and PIP5K1C. Interacts with LDLRAP1. Interacts with AMPH and BIN1. Interacts with ARF6 (GDP-bound). Interacts (dephosphorylated at Tyr-737) with ARRB1; phosphorylation of AP2B1 at Tyr-737 disrupts the interaction. Interacts with SLC2A8. Interacts with SCYL1 and SCYL2. Interacts with TGFBR1 and TGFBR2. Interacts with PIP5K1C; clathrin competes with PIP5K1C. Interacts with DENND1B. Interacts with FCHO1. Interacts with RFTN1. Interacts with KIAA1107. Together with AP2A1 or AP2A2 and AP2M1, it interacts with ADAM10; this interaction facilitates ADAM10 endocytosis from the plasma membrane during long-term potentiation in hippocampal neurons. As to expression, expressed in the brain (at protein level).

The protein localises to the cell membrane. The protein resides in the membrane. It is found in the coated pit. Functionally, component of the adaptor protein complex 2 (AP-2). Adaptor protein complexes function in protein transport via transport vesicles in different membrane traffic pathways. Adaptor protein complexes are vesicle coat components and appear to be involved in cargo selection and vesicle formation. AP-2 is involved in clathrin-dependent endocytosis in which cargo proteins are incorporated into vesicles surrounded by clathrin (clathrin-coated vesicles, CCVs) which are destined for fusion with the early endosome. The clathrin lattice serves as a mechanical scaffold but is itself unable to bind directly to membrane components. Clathrin-associated adaptor protein (AP) complexes which can bind directly to both the clathrin lattice and to the lipid and protein components of membranes are considered to be the major clathrin adaptors contributing the CCV formation. AP-2 also serves as a cargo receptor to selectively sort the membrane proteins involved in receptor-mediated endocytosis. AP-2 seems to play a role in the recycling of synaptic vesicle membranes from the presynaptic surface. AP-2 recognizes Y-X-X-[FILMV] (Y-X-X-Phi) and [ED]-X-X-X-L-[LI] endocytosis signal motifs within the cytosolic tails of transmembrane cargo molecules. AP-2 may also play a role in maintaining normal post-endocytic trafficking through the ARF6-regulated, non-clathrin pathway. During long-term potentiation in hippocampal neurons, AP-2 is responsible for the endocytosis of ADAM10. The AP-2 beta subunit acts via its C-terminal appendage domain as a scaffolding platform for endocytic accessory proteins; at least some clathrin-associated sorting proteins (CLASPs) are recognized by their [DE]-X(1,2)-F-X-X-[FL]-X-X-X-R motif. The AP-2 beta subunit binds to clathrin heavy chain, promoting clathrin lattice assembly; clathrin displaces at least some CLASPs from AP2B1 which probably then can be positioned for further coat assembly. This Mus musculus (Mouse) protein is AP-2 complex subunit beta (Ap2b1).